A 129-amino-acid polypeptide reads, in one-letter code: uncharacterized protein (129 aa).

Residues 1–129 (MGRMASPLRS…PARQSARMAR (129 aa)) form a disordered region. Over residues 18 to 46 (ESTRHKETSTVRVETSSHREETSSHRVET) the composition is skewed to basic and acidic residues. Positions 47 to 59 (SSRQVRTSSRQVE) are enriched in low complexity. Polar residues predominate over residues 70 to 97 (LTPSTKRLPQFLEVSSQHVETSSQCTET).

This is an uncharacterized protein from Mus musculus (Mouse).